Here is a 635-residue protein sequence, read N- to C-terminus: Transcription termination factor FttA (635 aa).

KHa stretches follow at residues 1 to 69 and 4 to 69; these read MSAE…PSVL and EDIL…PSVL. The interval 70-137 is KHb; the sequence is VEPDIAKDKI…WAPKPVRTPP (68 aa). Metallo-beta-lactamase N-terminus stretches follow at residues 179–382 and 179–383; these read WVRT…YGGY and WVRT…GGYD. Beta-Casp regions lie at residues 180 to 577 and 383 to 576; these read VRTS…GFSG and DDVL…EGFS. Residues His-241, His-243, Asp-245, His-246, His-328, and Asp-351 each coordinate Zn(2+). 2 metallo-beta-lactamase C-terminus regions span residues 577–635 and 578–635; these read GHSD…IRLR and HSDR…IRLR. A Zn(2+)-binding site is contributed by His-602.

It belongs to the metallo-beta-lactamase superfamily. RNA-metabolizing metallo-beta-lactamase-like family. FttA subfamily. As to quaternary structure, homodimer. Interacts with RNA polymerase (RNAP); interaction is not dependent on DNA or RNA. Interacts with the Spt4-Spt5 complex. It depends on Zn(2+) as a cofactor.

It is found in the chromosome. Functionally, terminates transcription on the whole genome. Termination is linked to FttA-mediated RNA cleavage and does not require NTP hydrolysis. Cleaves endonucleolytically at the RNA exit channel of RNA polymerase (RNAP); the 5'-3' exonuclease activity of this protein degrades the nascent RNA released from RNAP. Terminates transcription genome-wide. Transcription termination is most effective in vivo on RNAs with more than one U4-tract in their 3'-ends (including non-protein coding RNAs); U4-tracts are recognized by this protein. Also plays a role in termination of RNAs without U-tracts by an unknown mechanism. Has endonuclease activity after U-rich tracts in transcription termination sites. Binds RNA at U4-tracts found directly upstream of the experimentally determined transcription termination sites; binds preferentially to RNAs with more U4-tracts at their 3'-ends. This Methanococcus maripaludis (strain DSM 14266 / JCM 13030 / NBRC 101832 / S2 / LL) protein is Transcription termination factor FttA.